The primary structure comprises 187 residues: Casparian strip membrane protein 1 (187 aa).

Positions 1–10 (MKGSSEHGET) are enriched in basic and acidic residues. The disordered stretch occupies residues 1–20 (MKGSSEHGETSKQAPLGSSR). Over 1–27 (MKGSSEHGETSKQAPLGSSRGVSKGVS) the chain is Cytoplasmic. The chain crosses the membrane as a helical span at residues 28 to 48 (VLDLILRFIAIIGTLASAIAM). The Extracellular segment spans residues 49–75 (GTTNETLPFFTQFIRFKAQYSDLPTLT). Asparagine 52 carries an N-linked (GlcNAc...) asparagine glycan. Residues 76–96 (FFVVANSIVCAYLTLSLPLSI) form a helical membrane-spanning segment. Residues 97–115 (VHIIRSRAKYSRLLLVVLD) lie on the Cytoplasmic side of the membrane. The chain crosses the membrane as a helical span at residues 116–136 (AAMLALVTPGASAAAAIVYLA). At 137–162 (HKGNVRANWLAICQQFDSFCERISGC) the chain is on the extracellular side. The chain crosses the membrane as a helical span at residues 163 to 183 (LIGSFGAMVMLVLLLLLSAIA). The Cytoplasmic portion of the chain corresponds to 184–187 (LARR).

Belongs to the Casparian strip membrane proteins (CASP) family. In terms of assembly, homodimer and heterodimers.

It localises to the cell membrane. Its function is as follows. Regulates membrane-cell wall junctions and localized cell wall deposition. Required for establishment of the Casparian strip membrane domain (CSD) and the subsequent formation of Casparian strips, a cell wall modification of the root endodermis that determines an apoplastic barrier between the intraorganismal apoplasm and the extraorganismal apoplasm and prevents lateral diffusion. This Zea mays (Maize) protein is Casparian strip membrane protein 1.